The following is a 427-amino-acid chain: Trigger factor (427 aa).

The 86-residue stretch at 163 to 248 folds into the PPIase FKBP-type domain; sequence GDTVVIDFVG…IHEVKAKEVP (86 aa).

This sequence belongs to the FKBP-type PPIase family. Tig subfamily.

It localises to the cytoplasm. The enzyme catalyses [protein]-peptidylproline (omega=180) = [protein]-peptidylproline (omega=0). Functionally, involved in protein export. Acts as a chaperone by maintaining the newly synthesized protein in an open conformation. Functions as a peptidyl-prolyl cis-trans isomerase. This chain is Trigger factor, found in Streptococcus mutans serotype c (strain ATCC 700610 / UA159).